The sequence spans 143 residues: Fluoride-specific ion channel FluC 1 (143 aa).

Transmembrane regions (helical) follow at residues 13 to 33 (VLVGLVFLGGCLGTLIRSVIA), 42 to 62 (GVPWGTLAINLVGAFVLATLL), 80 to 100 (LCIGTGLLGGFTTYSALTVEA), and 111 to 131 (WGIAYLLTSVAAGALLAWVVI). Glycine 88 and threonine 91 together coordinate Na(+).

This sequence belongs to the fluoride channel Fluc/FEX (TC 1.A.43) family.

The protein localises to the cell membrane. The enzyme catalyses fluoride(in) = fluoride(out). With respect to regulation, na(+) is not transported, but it plays an essential structural role and its presence is essential for fluoride channel function. Its function is as follows. Fluoride-specific ion channel. Important for reducing fluoride concentration in the cell, thus reducing its toxicity. This Cutibacterium acnes (strain DSM 16379 / KPA171202) (Propionibacterium acnes) protein is Fluoride-specific ion channel FluC 1.